A 491-amino-acid polypeptide reads, in one-letter code: Angiopoietin-related protein 1 (491 aa).

The signal sequence occupies residues 1–23 (MKTFTWTLGVLFFLLVDTGHCRG). Residues 80–168 (ITRMDLENLK…LNVTTEMLKM (89 aa)) are a coiled coil. Residues Asn-160 and Asn-188 are each glycosylated (N-linked (GlcNAc...) asparagine). A Fibrinogen C-terminal domain is found at 271 to 491 (FINEGPFKDC…AVQMMIKPID (221 aa)). 2 disulfide bridges follow: Cys-280-Cys-309 and Cys-432-Cys-445.

Highly expressed in adrenal gland, placenta, thyroid gland, heart, skeletal muscle and small intestine. Weakly expressed in testis, ovary, colon, pancreas, kidney and stomach.

Its subcellular location is the secreted. The protein is Angiopoietin-related protein 1 (ANGPTL1) of Homo sapiens (Human).